We begin with the raw amino-acid sequence, 748 residues long: Methylmalonyl-CoA mutase, mitochondrial (748 aa).

A mitochondrion-targeting transit peptide spans 1–30 (MLRAKNQLFLLSPHYLKQLNIPSASRWKRL). Gln48 contributes to the malonyl-CoA binding site. N6-acetyllysine is present on Lys87. Malonyl-CoA-binding positions include 94 to 97 (YPTM) and 104 to 108 (TIRQY). At Lys210 the chain carries N6-acetyllysine. Malonyl-CoA is bound by residues 214 to 216 (TIQ), Arg226, Lys253, His263, and 302 to 304 (RLS). N6-acetyllysine is present on Lys333. An N6-succinyllysine modification is found at Lys341. Ser479 carries the post-translational modification Phosphoserine. Lys593 is subject to N6-succinyllysine. N6-acetyllysine is present on Lys600. The region spanning 612–744 (RPRLLVAKMG…DDIEKCLAEK (133 aa)) is the B12-binding domain. His625 contributes to the adenosylcob(III)alamin binding site.

The protein belongs to the methylmalonyl-CoA mutase family. As to quaternary structure, homodimer. Interacts (the apoenzyme form) with MMAA; the interaction is GTP dependent. Adenosylcob(III)alamin serves as cofactor.

It localises to the mitochondrion matrix. The protein localises to the mitochondrion. It is found in the cytoplasm. The enzyme catalyses (R)-methylmalonyl-CoA = succinyl-CoA. Its activity is regulated as follows. Inhibited by itaconyl-CoA, a metabolite that inactivates the coenzyme B12 cofactor. Functionally, catalyzes the reversible isomerization of methylmalonyl-CoA (MMCoA) (generated from branched-chain amino acid metabolism and degradation of dietary odd chain fatty acids and cholesterol) to succinyl-CoA (3-carboxypropionyl-CoA), a key intermediate of the tricarboxylic acid cycle. The polypeptide is Methylmalonyl-CoA mutase, mitochondrial (Mmut) (Mus musculus (Mouse)).